Consider the following 185-residue polypeptide: dCTP deaminase (185 aa).

DCTP is bound by residues 107–112 (KSTYAR), 131–133 (TLE), glutamine 152, tyrosine 166, and glutamine 176. The Proton donor/acceptor role is filled by glutamate 133.

It belongs to the dCTP deaminase family. As to quaternary structure, homotrimer.

The catalysed reaction is dCTP + H2O + H(+) = dUTP + NH4(+). The protein operates within pyrimidine metabolism; dUMP biosynthesis; dUMP from dCTP (dUTP route): step 1/2. Catalyzes the deamination of dCTP to dUTP. This chain is dCTP deaminase, found in Anaplasma marginale (strain Florida).